A 347-amino-acid polypeptide reads, in one-letter code: Protein phosphatase 2C homolog 1 (347 aa).

The segment at 1–41 (MKGSHPNAGSLLEPLHKLNPFSENSTSGHRKNASDHSADGE) is disordered. Residues 32 to 41 (NASDHSADGE) are compositionally biased toward basic and acidic residues. The PPM-type phosphatase domain maps to 71 to 323 (LAGLMEDKNQ…DNITCIVVNL (253 aa)). Mn(2+) is bound by residues D109, G110, D275, and D314.

This sequence belongs to the PP2C family. Monomer. It depends on Mg(2+) as a cofactor. Mn(2+) serves as cofactor.

It carries out the reaction O-phospho-L-seryl-[protein] + H2O = L-seryl-[protein] + phosphate. It catalyses the reaction O-phospho-L-threonyl-[protein] + H2O = L-threonyl-[protein] + phosphate. Serine and threonine phosphatase. Has a specialized role in the heat shock response. May be responsible for the dephosphorylation of hsp90. In Schizosaccharomyces pombe (strain 972 / ATCC 24843) (Fission yeast), this protein is Protein phosphatase 2C homolog 1 (ptc1).